The following is a 546-amino-acid chain: RuBisCO large subunit-binding protein subunit alpha, chloroplastic (546 aa).

The N-terminal 6 residues, 1–6 (RFSVRA), are a transit peptide targeting the chloroplast. Ser-50 carries the phosphoserine modification.

The protein belongs to the chaperonin (HSP60) family. In terms of assembly, oligomer of probably six alpha and six beta subunits.

It is found in the plastid. Its subcellular location is the chloroplast. In terms of biological role, this protein binds RuBisCO small and large subunits and is implicated in the assembly of the enzyme oligomer. In Brassica napus (Rape), this protein is RuBisCO large subunit-binding protein subunit alpha, chloroplastic.